Here is a 108-residue protein sequence, read N- to C-terminus: MGVHRITSEAAKYYAQREKVVGAGVSLLGEASMNLDKLSKEQLEKLGDLAAKLLPHSPGYAGKMMPIVARLFWRLAGVGEKEFGFAELDELEKEIERLKEELGFNSQQ.

This is an uncharacterized protein from Archaeoglobus fulgidus (strain ATCC 49558 / DSM 4304 / JCM 9628 / NBRC 100126 / VC-16).